The following is a 556-amino-acid chain: Potassium-transporting ATPase potassium-binding subunit (556 aa).

Transmembrane regions (helical) follow at residues 6-26 (AGIA…VPLG), 65-85 (SVLA…LVQG), 133-153 (GLAV…IALV), 176-196 (LRIL…GGAI), 249-269 (PTPW…FSLP), 283-303 (VAIA…TMLL), 378-398 (GLYG…LMVG), 415-435 (LAAS…AIAM), 483-503 (ALGL…LALA), and 526-546 (FVGM…LPIL).

This sequence belongs to the KdpA family. In terms of assembly, the system is composed of three essential subunits: KdpA, KdpB and KdpC.

It localises to the cell membrane. Part of the high-affinity ATP-driven potassium transport (or Kdp) system, which catalyzes the hydrolysis of ATP coupled with the electrogenic transport of potassium into the cytoplasm. This subunit binds the extracellular potassium ions and delivers the ions to the membrane domain of KdpB through an intramembrane tunnel. The protein is Potassium-transporting ATPase potassium-binding subunit of Mycolicibacterium smegmatis (strain ATCC 700084 / mc(2)155) (Mycobacterium smegmatis).